The following is a 217-amino-acid chain: LSM12 homolog A (217 aa).

The region spanning 9-78 (VNAVNDCFSI…CSNVQVIKEC (70 aa)) is the Sm domain. Positions 86–184 (QKLNLEQVKM…IIKQFFNTRP (99 aa)) constitute an AD domain. The tract at residues 185–217 (SPVPESGAAASTSSPSVSPTSSSLASGSPVPAN) is disordered. Residues 190 to 217 (SGAAASTSSPSVSPTSSSLASGSPVPAN) are compositionally biased toward low complexity.

It belongs to the LSM12 family. Component of the Atx2-tyf activator complex, composed of Atx2, tyf, pAbp, Lsm12a. Interacts with tyf, Atx2 and pAbp.

In terms of biological role, component of the Atx2-tyf activator complex which functions in the circadian pacemaker neurons to activate the TYF-dependent translation of per and maintain 24 hour periodicity in circadian behaviors. Within the Atx2-tyf complex, likely to function as a molecular adapter which stabilizes the interaction between Atx2 and the translational regulator tyf. The polypeptide is LSM12 homolog A (Drosophila melanogaster (Fruit fly)).